The primary structure comprises 426 residues: Antigen EM13 (426 aa).

The region spanning 1 to 240 (MIQERADIEK…TVAKVDADAD (240 aa)) is the F-BAR domain. Disordered regions lie at residues 287–315 (LTSLKTITSPDRGGPIPGTTDSGSNISTS) and 350–369 (ISKEKQRVEDTPPYPDFVDD). Polar residues predominate over residues 305 to 315 (TTDSGSNISTS). Residues 371-426 (RPGVPIRALYDYVGVEADELSFNSGDLFEKLEDEDEQGWCKGRKDGRVGLYPRQLR) form the SH3 domain.

This is Antigen EM13 (EM13) from Echinococcus multilocularis (Fox tapeworm).